A 510-amino-acid polypeptide reads, in one-letter code: NAD(P)H-quinone oxidoreductase subunit 2 B, chloroplastic (510 aa).

13 consecutive transmembrane segments (helical) span residues 24-44 (LLLF…GLIL), 57-77 (IPWL…ALLF), 99-119 (IFQF…VEYI), 124-144 (MAIT…MFLC), 149-169 (LITI…LSGY), 183-203 (YLLM…WLYG), 227-247 (PGIS…LSPA), 295-315 (WHLL…LIAI), 323-343 (MLAY…IVGD), 354-374 (YMLF…LFGL), 395-415 (ALSL…AGFF), 418-438 (LYLF…IGLL), and 484-504 (MIVC…IIAI).

Belongs to the complex I subunit 2 family. As to quaternary structure, NDH is composed of at least 16 different subunits, 5 of which are encoded in the nucleus.

It localises to the plastid. It is found in the chloroplast thylakoid membrane. It carries out the reaction a plastoquinone + NADH + (n+1) H(+)(in) = a plastoquinol + NAD(+) + n H(+)(out). The catalysed reaction is a plastoquinone + NADPH + (n+1) H(+)(in) = a plastoquinol + NADP(+) + n H(+)(out). In terms of biological role, NDH shuttles electrons from NAD(P)H:plastoquinone, via FMN and iron-sulfur (Fe-S) centers, to quinones in the photosynthetic chain and possibly in a chloroplast respiratory chain. The immediate electron acceptor for the enzyme in this species is believed to be plastoquinone. Couples the redox reaction to proton translocation, and thus conserves the redox energy in a proton gradient. In Daucus carota (Wild carrot), this protein is NAD(P)H-quinone oxidoreductase subunit 2 B, chloroplastic.